Here is a 342-residue protein sequence, read N- to C-terminus: Phosphate acyltransferase (342 aa).

It belongs to the PlsX family. In terms of assembly, homodimer. Probably interacts with PlsY.

It is found in the cytoplasm. It carries out the reaction a fatty acyl-[ACP] + phosphate = an acyl phosphate + holo-[ACP]. It participates in lipid metabolism; phospholipid metabolism. Its function is as follows. Catalyzes the reversible formation of acyl-phosphate (acyl-PO(4)) from acyl-[acyl-carrier-protein] (acyl-ACP). This enzyme utilizes acyl-ACP as fatty acyl donor, but not acyl-CoA. In Alkalilimnicola ehrlichii (strain ATCC BAA-1101 / DSM 17681 / MLHE-1), this protein is Phosphate acyltransferase.